Reading from the N-terminus, the 214-residue chain is Pyridoxine/pyridoxamine 5'-phosphate oxidase (214 aa).

Substrate is bound by residues 8 to 11 (RLSY) and R66. FMN-binding positions include 61-66 (RTVLLR), 76-77 (FT), K83, and Q105. Y123, R127, and S131 together coordinate substrate. A disordered region spans residues 126–146 (SRPRESQLAAHASDPQSAPVS). Residues 141–142 (QS) and W187 each bind FMN. 193–195 (RMH) lines the substrate pocket. R197 provides a ligand contact to FMN.

It belongs to the pyridoxamine 5'-phosphate oxidase family. Homodimer. The cofactor is FMN.

It carries out the reaction pyridoxamine 5'-phosphate + O2 + H2O = pyridoxal 5'-phosphate + H2O2 + NH4(+). The catalysed reaction is pyridoxine 5'-phosphate + O2 = pyridoxal 5'-phosphate + H2O2. It functions in the pathway cofactor metabolism; pyridoxal 5'-phosphate salvage; pyridoxal 5'-phosphate from pyridoxamine 5'-phosphate: step 1/1. The protein operates within cofactor metabolism; pyridoxal 5'-phosphate salvage; pyridoxal 5'-phosphate from pyridoxine 5'-phosphate: step 1/1. In terms of biological role, catalyzes the oxidation of either pyridoxine 5'-phosphate (PNP) or pyridoxamine 5'-phosphate (PMP) into pyridoxal 5'-phosphate (PLP). The sequence is that of Pyridoxine/pyridoxamine 5'-phosphate oxidase from Deinococcus deserti (strain DSM 17065 / CIP 109153 / LMG 22923 / VCD115).